Reading from the N-terminus, the 659-residue chain is Ion-translocating oxidoreductase complex subunit C (659 aa).

2 consecutive 4Fe-4S ferredoxin-type domains span residues 366 to 397 (TEMG…QQLY) and 407 to 436 (KARN…VQYY). [4Fe-4S] cluster is bound by residues Cys-377, Cys-380, Cys-383, Cys-387, Cys-416, Cys-419, Cys-422, and Cys-426.

The protein belongs to the 4Fe4S bacterial-type ferredoxin family. RnfC subfamily. The complex is composed of six subunits: RnfA, RnfB, RnfC, RnfD, RnfE and RnfG. Requires [4Fe-4S] cluster as cofactor.

It is found in the cell inner membrane. Part of a membrane-bound complex that couples electron transfer with translocation of ions across the membrane. The protein is Ion-translocating oxidoreductase complex subunit C of Yersinia pestis bv. Antiqua (strain Nepal516).